Here is a 399-residue protein sequence, read N- to C-terminus: Lipoyl synthase, mitochondrial (399 aa).

A mitochondrion-targeting transit peptide spans 1 to 30 (MRAVLELTRRRARNARFARARAVVGARARA). Positions 31–41 (ADAQELRDDSK) are enriched in basic and acidic residues. Positions 31–58 (ADAQELRDDSKGGSSVDKATSTAAEARE) are disordered. [4Fe-4S] cluster is bound by residues cysteine 131, cysteine 136, cysteine 142, cysteine 162, cysteine 166, cysteine 169, and serine 375. Residues 145–364 (GGDGKTATAT…QEIAEEMGFL (220 aa)) form the Radical SAM core domain.

The protein belongs to the radical SAM superfamily. Lipoyl synthase family. Requires [4Fe-4S] cluster as cofactor.

It is found in the mitochondrion. It carries out the reaction [[Fe-S] cluster scaffold protein carrying a second [4Fe-4S](2+) cluster] + N(6)-octanoyl-L-lysyl-[protein] + 2 oxidized [2Fe-2S]-[ferredoxin] + 2 S-adenosyl-L-methionine + 4 H(+) = [[Fe-S] cluster scaffold protein] + N(6)-[(R)-dihydrolipoyl]-L-lysyl-[protein] + 4 Fe(3+) + 2 hydrogen sulfide + 2 5'-deoxyadenosine + 2 L-methionine + 2 reduced [2Fe-2S]-[ferredoxin]. Its pathway is protein modification; protein lipoylation via endogenous pathway; protein N(6)-(lipoyl)lysine from octanoyl-[acyl-carrier-protein]: step 2/2. Its function is as follows. Catalyzes the radical-mediated insertion of two sulfur atoms into the C-6 and C-8 positions of the octanoyl moiety bound to the lipoyl domains of lipoate-dependent enzymes, thereby converting the octanoylated domains into lipoylated derivatives. The protein is Lipoyl synthase, mitochondrial of Ostreococcus lucimarinus (strain CCE9901).